We begin with the raw amino-acid sequence, 917 residues long: Interleukin-6 receptor subunit beta (917 aa).

The first 22 residues, 1-22 (MSAPRIWLAQALLFFLTTESIG), serve as a signal peptide directing secretion. The Extracellular segment spans residues 23-617 (QLLEPCGYIY…TPKFAQGEIE (595 aa)). The 95-residue stretch at 26-120 (EPCGYIYPEF…IEQNVYGVTM (95 aa)) folds into the Ig-like C2-type domain. 2 cysteine pairs are disulfide-bonded: cysteine 28/cysteine 54 and cysteine 48/cysteine 103. Asparagine 43, asparagine 61, asparagine 83, and asparagine 131 each carry an N-linked (GlcNAc...) asparagine glycan. Fibronectin type-III domains follow at residues 128-221 (KPTN…VKPT), 222-322 (PPYN…TYED), 327-417 (PPSF…IPSP), 422-515 (AYSV…LKQA), and 517-611 (PARG…TPKF). Cysteine 134 and cysteine 144 are disulfide-bonded. An N-linked (GlcNAc...) asparagine glycan is attached at asparagine 157. Cysteines 172 and 180 form a disulfide. A glycan (N-linked (GlcNAc...) asparagine) is linked at asparagine 225. Positions 308 to 312 (WSDWS) match the WSXWS motif motif. N-linked (GlcNAc...) asparagine glycosylation occurs at asparagine 388. Cysteine 456 and cysteine 464 are disulfide-bonded. N-linked (GlcNAc...) asparagine glycosylation is found at asparagine 476 and asparagine 551. A helical membrane pass occupies residues 618–639 (AIVVPVCLAFLLTTLLGVLFCF). Residues 640-917 (NKRDLIKKHI…TVRQGGYMPQ (278 aa)) lie on the Cytoplasmic side of the membrane. Residues 649-657 (IWPNVPDPS) carry the Box 1 motif motif. 2 disordered regions span residues 658 to 678 (KSHI…NSKD) and 719 to 754 (TEGH…TAST). Phosphoserine occurs at positions 659 and 665. The segment covering 729 to 753 (SSCMSSSRPSISSNEENESAQSTAS) has biased composition (low complexity). A phosphoserine mark is found at serine 780, serine 787, serine 827, and serine 837. The disordered stretch occupies residues 898–917 (EEIPKSYLPQTVRQGGYMPQ).

Belongs to the type I cytokine receptor family. Type 2 subfamily. In terms of assembly, component of a hexamer of two molecules each of IL6, IL6R and IL6ST; associates with the complex IL6:IL6R but does not interact with IL6. Forms heterodimers composed of LIFR and IL6ST (type I OSM receptor) which are activated by LIF and OSM. Also forms heterodimers composed of OSMR and IL6ST (type II receptor) which are activated by OSM but not by LIF. Interacts with HCK. Interacts with INPP5D/SHIP1. Interacts with SRC and YES. Interacts with ARMH4; this interaction prevents IL6ST protein homodimerization and bridges ARMH4 with IL6R and STAT3 and therefore inhibits phosphorylation of STAT3 at 'Tyr-705'. Post-translationally, phosphorylation of Ser-780 down-regulates cell surface expression. In terms of processing, heavily N-glycosylated. Glycosylation is required for protein stability and localization in plasma membrane but not for ligand binding. As to expression, expression not restricted to IL6-responsive cells. Found in tissues such as brain, heart, thymus, spleen, kidney, lung and liver. Found in all the cell lines tested except BaF-B03. Expressed paraventricular nucleus of the hypothalamus.

It is found in the cell membrane. Signal-transducing molecule. The receptor systems for IL6, LIF, OSM, CNTF, IL11, CTF1 and BSF3 can utilize IL6ST for initiating signal transmission. Binding of IL6 to IL6R induces IL6ST homodimerization and formation of a high-affinity receptor complex, which activates the intracellular JAK-MAPK and JAK-STAT3 signaling pathways. That causes phosphorylation of IL6ST tyrosine residues which in turn activates STAT3. In parallel, the IL6 signaling pathway induces the expression of two cytokine receptor signaling inhibitors, SOCS1 and SOCS3, which inhibit JAK and terminate the activity of the IL6 signaling pathway as a negative feedback loop. Also activates the yes-associated protein 1 (YAP) and NOTCH pathways to control inflammation-induced epithelial regeneration, independently of STAT3. Mediates signals which regulate immune response, hematopoiesis, pain control and bone metabolism. Has a role in embryonic development. Essential for survival of motor and sensory neurons and for differentiation of astrocytes. Required for expression of TRPA1 in nociceptive neurons. Required for the maintenance of PTH1R expression in the osteoblast lineage and for the stimulation of PTH-induced osteoblast differentiation. Required for normal trabecular bone mass and cortical bone composition. The protein is Interleukin-6 receptor subunit beta of Mus musculus (Mouse).